We begin with the raw amino-acid sequence, 327 residues long: MEELLIENSHRFTIFPIQHPECWNWYKKLESLTWTAQEVDMCKDIDDWEAMPKSQREFYKQILAFFVVADEIVIENLLTNFMREIKVKEVLYFYTMQAAQECVHSEAYSIQVKTLIPDEKEQQRIFSGIEKHPIIKKMAQWVRQWMDPTKNSLGERLVGFAAVEGILFQNHFVAIQFLKEQNIMPGLVSYNEFISRDEGVHCSFACFLISNYVYNIPEERIIHKILKEAVELVDEFINYAFDKARGRVPGFSKEMLFQYIRYFTDNLCFMMQCKSIYKVGNPFPQMTKFFLNEVEKTNFFELRPTQYQNCVKDDAFAFKLFLNDDDF.

Residues D70, E101, and H104 each coordinate Fe cation. Residue Y108 is part of the active site. Residues E164, E198, and H201 each contribute to the Fe cation site.

This sequence belongs to the ribonucleoside diphosphate reductase small chain family. As to quaternary structure, heterotetramer composed of a homodimer of the large subunit (R1) and a homodimer of the small subunit (R2). Larger multisubunit protein complex are also active, composed of (R1)n(R2)n. Fe cation serves as cofactor.

The enzyme catalyses a 2'-deoxyribonucleoside 5'-diphosphate + [thioredoxin]-disulfide + H2O = a ribonucleoside 5'-diphosphate + [thioredoxin]-dithiol. Ribonucleoside-diphosphate reductase holoenzyme provides the precursors necessary for viral DNA synthesis. Allows virus growth in non-dividing cells. Catalyzes the biosynthesis of deoxyribonucleotides from the corresponding ribonucleotides. This chain is Ribonucleoside-diphosphate reductase small chain, found in African swine fever virus (isolate Tick/South Africa/Pretoriuskop Pr4/1996) (ASFV).